The following is a 780-amino-acid chain: GATOR2 complex protein WDR24 (780 aa).

WD repeat units follow at residues 67–107 (SLNF…RNKQ), 113–153 (EHKR…SVST), 156–196 (GQSE…RCER), 200–240 (AHNG…AKEI), 244–286 (QTIA…IPFA), and 290–333 (EHKD…IDRA). Residues 708 to 730 (NCSNCKRPMSNKGWICDRCRQCA) form a C4-type zinc finger. Positions 709, 712, 723, 726, 733, 736, 747, 750, 752, 755, 758, 769, 773, 775, and 777 each coordinate Zn(2+). The RING-type; atypical zinc finger occupies 731 to 780 (SMCAVCHHVVKGLFVWCQGCCHGGHLQHIMNWMQNNCYCPAGCGHVCEYS).

The protein belongs to the WD repeat WDR24 family. As to quaternary structure, component of the GATOR2 subcomplex, composed of MIOS, SEC13, SEH1L, WDR24 and WDR59. The GATOR2 complex interacts with CASTOR1 and CASTOR2; the interaction is negatively regulated by arginine. The GATOR2 complex interacts with SESN1, SESN2 and SESN3; the interaction is negatively regulated by amino acids.

Its subcellular location is the lysosome membrane. It catalyses the reaction S-ubiquitinyl-[E2 ubiquitin-conjugating enzyme]-L-cysteine + [acceptor protein]-L-lysine = [E2 ubiquitin-conjugating enzyme]-L-cysteine + N(6)-ubiquitinyl-[acceptor protein]-L-lysine.. It participates in protein modification; protein ubiquitination. With respect to regulation, the GATOR2 complex is negatively regulated by the upstream amino acid sensors CASTOR1 and SESN2, which sequester the GATOR2 complex in absence of amino acids. In the presence of abundant amino acids, GATOR2 is released from CASTOR1 and SESN2 and activated. Catalytic component of the GATOR2 complex, a multiprotein complex that acts as an activator of the amino acid-sensing branch of the mTORC1 signaling pathway. The GATOR2 complex indirectly activates mTORC1 through the inhibition of the GATOR1 subcomplex. GATOR2 probably acts as an E3 ubiquitin-protein ligase toward GATOR1. In the presence of abundant amino acids, the GATOR2 complex mediates ubiquitination of the NPRL2 core component of the GATOR1 complex, leading to GATOR1 inactivation. In the absence of amino acids, GATOR2 is inhibited, activating the GATOR1 complex. In addition to its role in regulation of the mTORC1 complex, promotes the acidification of lysosomes and facilitates autophagic flux. Within the GATOR2 complex, WDR24 constitutes the catalytic subunit that mediates 'Lys-6'-linked ubiquitination of NPRL2. The polypeptide is GATOR2 complex protein WDR24 (Xenopus laevis (African clawed frog)).